Here is a 142-residue protein sequence, read N- to C-terminus: Large ribosomal subunit protein uL13 (142 aa).

The protein belongs to the universal ribosomal protein uL13 family. Part of the 50S ribosomal subunit.

This protein is one of the early assembly proteins of the 50S ribosomal subunit, although it is not seen to bind rRNA by itself. It is important during the early stages of 50S assembly. In Shewanella oneidensis (strain ATCC 700550 / JCM 31522 / CIP 106686 / LMG 19005 / NCIMB 14063 / MR-1), this protein is Large ribosomal subunit protein uL13.